The following is a 180-amino-acid chain: ATP synthase subunit delta (180 aa).

The protein belongs to the ATPase delta chain family. In terms of assembly, F-type ATPases have 2 components, F(1) - the catalytic core - and F(0) - the membrane proton channel. F(1) has five subunits: alpha(3), beta(3), gamma(1), delta(1), epsilon(1). F(0) has three main subunits: a(1), b(2) and c(10-14). The alpha and beta chains form an alternating ring which encloses part of the gamma chain. F(1) is attached to F(0) by a central stalk formed by the gamma and epsilon chains, while a peripheral stalk is formed by the delta and b chains.

It localises to the cell membrane. In terms of biological role, f(1)F(0) ATP synthase produces ATP from ADP in the presence of a proton or sodium gradient. F-type ATPases consist of two structural domains, F(1) containing the extramembraneous catalytic core and F(0) containing the membrane proton channel, linked together by a central stalk and a peripheral stalk. During catalysis, ATP synthesis in the catalytic domain of F(1) is coupled via a rotary mechanism of the central stalk subunits to proton translocation. This protein is part of the stalk that links CF(0) to CF(1). It either transmits conformational changes from CF(0) to CF(1) or is implicated in proton conduction. The sequence is that of ATP synthase subunit delta from Bacillus mycoides (strain KBAB4) (Bacillus weihenstephanensis).